A 515-amino-acid polypeptide reads, in one-letter code: MVLDLDLFRTDKGGDPEIIRETQRKRFKDVSLVDKLVQADTEWRKCRFTADNLNKAKNLCSKSIGEKMKKKEPVGDDDTLPEEAQNLEALTAETLSPLTVTQIKKVRVLVDEAVQKTDSDRLKLEAERFEYLREIGNLLHPSVPISNDEDADNKVERTWGDCTVQKKYSHVDLVVMVDGYEGEKGAIVAGSRGYFLKGPLVFLEQALINYALRILYSKNYNLLYTPFFMRKEVMQEVAQLSQFDEELYKVIGKGSEKSDDNTVDEKYLIATSEQPIAAFLRDEWLKPEELPIRYAGLSTCFRQEVGSHGRDTRGIFRVHQFEKIEQFVYASPHDGKSWEMFDEMIGTAESFYQTLGIPYRIVNIVSGALNHAASKKLDLEAWFPGSQAFRELVSCSNCTDYQARRLRIRYGQTKKMMDKAEFVHMLNATMCATTRVICAILENFQTEEGIIVPEPLKAFMPPGLTEIIKFVKPAPIDQETTKKQKKQQEGGKKKKHQGGDADLENKVENMSVNDS.

Residues 9–61 (RTDKGGDPEIIRETQRKRFKDVSLVDKLVQADTEWRKCRFTADNLNKAKNLCS) are interaction with tRNA. L-serine is bound by residues T271 and R302. ATP contacts are provided by residues 302–304 (RQE) and 318–321 (VHQF). L-serine is bound at residue E325. 391-394 (ELVS) contributes to the ATP binding site. N427 contacts L-serine. The segment at 475–515 (PIDQETTKKQKKQQEGGKKKKHQGGDADLENKVENMSVNDS) is disordered. The span at 479 to 507 (ETTKKQKKQQEGGKKKKHQGGDADLENKV) shows a compositional bias: basic and acidic residues. The Nuclear localization signal motif lies at 482–494 (KKQKKQQEGGKKK).

It belongs to the class-II aminoacyl-tRNA synthetase family. Type-1 seryl-tRNA synthetase subfamily.

It localises to the cytoplasm. Its subcellular location is the nucleus. It catalyses the reaction tRNA(Ser) + L-serine + ATP = L-seryl-tRNA(Ser) + AMP + diphosphate + H(+). It carries out the reaction tRNA(Sec) + L-serine + ATP = L-seryl-tRNA(Sec) + AMP + diphosphate + H(+). In terms of biological role, catalyzes the attachment of serine to tRNA(Ser) in a two-step reaction: serine is first activated by ATP to form Ser-AMP and then transferred to the acceptor end of tRNA(Ser). Is probably also able to aminoacylate tRNA(Sec) with serine, to form the misacylated tRNA L-seryl-tRNA(Sec), which will be further converted into selenocysteinyl-tRNA(Sec). In the nucleus, binds to the vegfa core promoter and prevents myc binding and transcriptional activation by myc. Thereby inhibits the production of vegfa and sprouting angiogenesis mediated by vegfa. This Danio rerio (Zebrafish) protein is Serine--tRNA ligase, cytoplasmic (sars1).